The chain runs to 139 residues: Protein cornichon homolog 4 (139 aa).

The next 3 helical transmembrane spans lie at 5 to 25 (VFVF…YFII), 57 to 77 (IVTV…NLPV), and 118 to 138 (LGFH…ALIN).

It belongs to the cornichon family. Interacts with Sec23/24 complex components SEC24B and SEC24D. Interacts with CCR5. Interacts with ADRB2 in the early secretory pathway.

The protein resides in the membrane. It localises to the endoplasmic reticulum. The protein localises to the endoplasmic reticulum-Golgi intermediate compartment. In terms of biological role, involved in G protein-coupled receptors (GPCRs) trafficking from the endoplasmic reticulum to the cell surface; it promotes the exit of GPCRs from the early secretory pathway, likely through interaction with the COPII machinery. The sequence is that of Protein cornichon homolog 4 (CNIH4) from Homo sapiens (Human).